Here is a 268-residue protein sequence, read N- to C-terminus: Thiazole synthase (268 aa).

K111 (schiff-base intermediate with DXP) is an active-site residue. Residues G172, 198–199, and 220–221 each bind 1-deoxy-D-xylulose 5-phosphate; these read AG and NT.

This sequence belongs to the ThiG family. In terms of assembly, homotetramer. Forms heterodimers with either ThiH or ThiS.

Its subcellular location is the cytoplasm. It carries out the reaction [ThiS sulfur-carrier protein]-C-terminal-Gly-aminoethanethioate + 2-iminoacetate + 1-deoxy-D-xylulose 5-phosphate = [ThiS sulfur-carrier protein]-C-terminal Gly-Gly + 2-[(2R,5Z)-2-carboxy-4-methylthiazol-5(2H)-ylidene]ethyl phosphate + 2 H2O + H(+). The protein operates within cofactor biosynthesis; thiamine diphosphate biosynthesis. Functionally, catalyzes the rearrangement of 1-deoxy-D-xylulose 5-phosphate (DXP) to produce the thiazole phosphate moiety of thiamine. Sulfur is provided by the thiocarboxylate moiety of the carrier protein ThiS. In vitro, sulfur can be provided by H(2)S. The chain is Thiazole synthase from Caulobacter sp. (strain K31).